The primary structure comprises 243 residues: NAD(P)H-quinone oxidoreductase subunit K (243 aa).

The [4Fe-4S] cluster site is built by Cys59, Cys60, Cys124, and Cys155.

Belongs to the complex I 20 kDa subunit family. As to quaternary structure, NDH-1 can be composed of about 15 different subunits; different subcomplexes with different compositions have been identified which probably have different functions. Requires [4Fe-4S] cluster as cofactor.

Its subcellular location is the cellular thylakoid membrane. It carries out the reaction a plastoquinone + NADH + (n+1) H(+)(in) = a plastoquinol + NAD(+) + n H(+)(out). The enzyme catalyses a plastoquinone + NADPH + (n+1) H(+)(in) = a plastoquinol + NADP(+) + n H(+)(out). In terms of biological role, NDH-1 shuttles electrons from an unknown electron donor, via FMN and iron-sulfur (Fe-S) centers, to quinones in the respiratory and/or the photosynthetic chain. The immediate electron acceptor for the enzyme in this species is believed to be plastoquinone. Couples the redox reaction to proton translocation, and thus conserves the redox energy in a proton gradient. Cyanobacterial NDH-1 also plays a role in inorganic carbon-concentration. The polypeptide is NAD(P)H-quinone oxidoreductase subunit K (Picosynechococcus sp. (strain ATCC 27264 / PCC 7002 / PR-6) (Agmenellum quadruplicatum)).